The sequence spans 843 residues: MELWRQCTHWLIQCRVLPPSHRVTWEGAQVCELAQALRDGVLLCQLLNNLLPHAINLREVNLRPQMSQFLCLKNIRTFLSTCCEKFGLKRSELFEAFDLFDVQDFGKVIYTLSALSWTPIAQNKGIMPFPTEDSALGDEDIYSGLSDQIDDTAEEDEDLYDCVENEEAEGDEIYEDLMRSESVPTPPKMTEYDKRCCCLREIQQTEEKYTDTLGSIQQHFMKPLQRFLKPQDMETIFVNIEELLSVHTHFLKELKDALSGPGATMLYQVFIKYKERFLVYGRYCSQVESAIKHLDQVATAREDVQMKLEECSQRANNGRFTLRDLLMVPMQRVLKYHLLLQELVKHTQDTTEKENLRLALDAMRDLAQCVNEVKRDNETLRQITNFQLSIENLDQSLANYGRPKIDGELKITSVERRSKTDRYAFLLDKALLICKRRGDSYDLKASVNLHSFQVRDDSSGERDNKKWSHMFLLIEDQGAQGYELFFKTRELKKKWMEQFEMAISNIYPENATANGHDFQMFSFEETTSCKACQMLLRGTFYQGYRCYRCRAPAHKECLGRVPPCGRQDFSGTMKKDKLHRRAQDKKRNELGLPKMEVCQEYYGIPPPPGAFGPFLRLNPGDIVELTKAEAEHTWWEGRNTATNEVGWFPCNRVRPYVHGPPQDLSVHLWYAGPMERAGAEGILTNRSDGTYLVRQRVKDTAEFAISIKYNVEVKHIKIMTSEGLYRITEKKAFRGLPELVEFYQQNSLKDCFKSLDTTLQFPYKEPERRAINKPPVGSTKYFGTAKARYDFCARDRSELSLKEGDIIKILNKKGQQGWWRGEIYGRIGWFPSNYVEEDYSEYC.

A Calponin-homology (CH) domain is found at 1–119 (MELWRQCTHW…YTLSALSWTP (119 aa)). Positions 194–373 (KRCCCLREIQ…RDLAQCVNEV (180 aa)) constitute a DH domain. The PH domain maps to 402–504 (RPKIDGELKI…WMEQFEMAIS (103 aa)). Residues 515–564 (GHDFQMFSFEETTSCKACQMLLRGTFYQGYRCYRCRAPAHKECLGRVPPC) form a Phorbol-ester/DAG-type zinc finger. In terms of domain architecture, SH3 1 spans 590–658 (LGLPKMEVCQ…PCNRVRPYVH (69 aa)). Positions 669 to 763 (WYAGPMERAG…SLDTTLQFPY (95 aa)) constitute an SH2 domain. In terms of domain architecture, SH3 2 spans 780–840 (KYFGTAKARY…PSNYVEEDYS (61 aa)). Phosphotyrosine occurs at positions 824 and 842.

In terms of assembly, interacts with SHB. Interacts with APS, DOCK2, GRB2, GRB3, DOCK2, SLA, TEC and ZNF655/VIK. Interacts with SIAH2; without leading to its degradation. Associates with BLNK, PLCG1, GRB2 and NCK1 in a B-cell antigen receptor-dependent fashion. Interacts with CBLB; which inhibits tyrosine phosphorylation and down-regulates activity. May interact with CCPG1. Interacts with CLNK. Interacts with THEMIS2. Interacts with NEK3 and this interaction is prolactin-dependent. Interacts with ITK. Interacts with PTK2B/PYK2. Interacts with HCK. Interacts with PTK2B/PYK2. Interacts (via SH2 domain) with SYK. Interacts with ANKRD54. Interacts with CD6. Interacts with LCP2; this interaction plays a role in TCR-mediated cytokine production. In terms of processing, phosphorylated by FYN. Phosphorylated on tyrosine residues by HCK in response to IFNG and bacterial lipopolysaccharide (LPS).

Its function is as follows. Couples tyrosine kinase signals with the activation of the Rho/Rac GTPases, thus leading to cell differentiation and/or proliferation. The protein is Proto-oncogene vav (Vav1) of Rattus norvegicus (Rat).